Here is a 436-residue protein sequence, read N- to C-terminus: Trigger factor (436 aa).

Residues 161–246 (EDQLNIDFVG…VNSVSEPKLP (86 aa)) form the PPIase FKBP-type domain.

Belongs to the FKBP-type PPIase family. Tig subfamily.

The protein localises to the cytoplasm. It catalyses the reaction [protein]-peptidylproline (omega=180) = [protein]-peptidylproline (omega=0). Its function is as follows. Involved in protein export. Acts as a chaperone by maintaining the newly synthesized protein in an open conformation. Functions as a peptidyl-prolyl cis-trans isomerase. The sequence is that of Trigger factor from Pseudomonas fluorescens (strain SBW25).